A 206-amino-acid chain; its full sequence is Small ribosomal subunit protein uS4 (206 aa).

In terms of domain architecture, S4 RNA-binding spans 96 to 158; sequence GRLDNVVYRM…AKQQTRIKAA (63 aa).

It belongs to the universal ribosomal protein uS4 family. In terms of assembly, part of the 30S ribosomal subunit. Contacts protein S5. The interaction surface between S4 and S5 is involved in control of translational fidelity.

In terms of biological role, one of the primary rRNA binding proteins, it binds directly to 16S rRNA where it nucleates assembly of the body of the 30S subunit. Functionally, with S5 and S12 plays an important role in translational accuracy. In Vibrio vulnificus (strain CMCP6), this protein is Small ribosomal subunit protein uS4.